The following is a 283-amino-acid chain: ATP phosphoribosyltransferase (283 aa).

This sequence belongs to the ATP phosphoribosyltransferase family. Long subfamily. It depends on Mg(2+) as a cofactor.

It localises to the cytoplasm. The enzyme catalyses 1-(5-phospho-beta-D-ribosyl)-ATP + diphosphate = 5-phospho-alpha-D-ribose 1-diphosphate + ATP. The protein operates within amino-acid biosynthesis; L-histidine biosynthesis; L-histidine from 5-phospho-alpha-D-ribose 1-diphosphate: step 1/9. Its activity is regulated as follows. Feedback inhibited by histidine. Catalyzes the condensation of ATP and 5-phosphoribose 1-diphosphate to form N'-(5'-phosphoribosyl)-ATP (PR-ATP). Has a crucial role in the pathway because the rate of histidine biosynthesis seems to be controlled primarily by regulation of HisG enzymatic activity. The polypeptide is ATP phosphoribosyltransferase (Phocaeicola vulgatus (strain ATCC 8482 / DSM 1447 / JCM 5826 / CCUG 4940 / NBRC 14291 / NCTC 11154) (Bacteroides vulgatus)).